A 131-amino-acid polypeptide reads, in one-letter code: Putative gamma-taxilin 2 (131 aa).

It belongs to the taxilin family.

This is Putative gamma-taxilin 2 (TXLNGY) from Pan troglodytes (Chimpanzee).